Reading from the N-terminus, the 271-residue chain is Short chain dehydrogenase virK (271 aa).

NADP(+) contacts are provided by Leu-13, Asp-59, Asn-87, Tyr-168, Lys-172, Val-201, and Thr-203. The active-site Proton donor is the Tyr-168. Lys-172 acts as the Lowers pKa of active site Tyr in catalysis.

This sequence belongs to the short-chain dehydrogenases/reductases (SDR) family.

The protein operates within secondary metabolite biosynthesis. In terms of biological role, short chain dehydrogenase; part of the gene cluster that mediates the biosynthesis of virensols and trichoxide, fungal natural products that contain or are derived from a salicylaldehyde core. The pathway begins with the synthesis of the reduced chain in virensol C by the highly reducing polyketide synthase virA via condensation of one acetate and 8 malonate units. VirA has interesting programming rules since the first 2 ketides are fully reduced, the 3 following ketides undergo beta-dehydration, and the last 3 ketides are only reduced to beta-hydroxys to yield the trihydroxy portion. The production of aldehyde virensol C by virA alone is surprising, since virA does not contain a reductase (R) domain that is typically associated with reductive product release in HRPKS. The cupin-domain enzyme virC is involved in enhancing virA product turnover. The short-chain dehydrogenase virB then oxidizes the C-7 alcohol of virensol C to a ketone, yielding virensol D. Virensol D is further transformed to salicylaldehyde 5-deoxyaurocitrin by the short-chain dehydrogenase virD. VirD catalyzes the dehydrogenation of C-3 to form the beta-ketone aldehyde, which is followed by the generation of the nucleophilic C-2 that is required for the intramolecular aldol condensation between C-2 and C-7, itself followed by dehydration and aromatization which leads to salicylaldehyde 5-deoxyaurocitrin. While the dehydrogenation of virensol D is definitely catalyzed by virD, the aldol condensation and dehydration may be uncatalyzed or assisted by virD. The short chain dehydrogenase virG then converts salicylaldehyde 5-deoxyaurocitrin into virensol B which is further hydroxylated by the cytochrome P450 monooxygenase virE to yield the hydroquinone virensol A. VirI then may oxidize virensol A to form the quinone, while virH performs the epoxidation. Finally, the two remaining short-chain dehydrogenases, virK and virL, are probably responsible for reducing the ketones to the corresponding alcohols to furnish the epoxycyclohexanol structure in trichoxide. The chain is Short chain dehydrogenase virK from Hypocrea virens (strain Gv29-8 / FGSC 10586) (Gliocladium virens).